Here is a 451-residue protein sequence, read N- to C-terminus: 3-phosphoshikimate 1-carboxyvinyltransferase (451 aa).

Residues Lys28, Ser29, and Arg33 each coordinate 3-phosphoshikimate. Residue Lys28 coordinates phosphoenolpyruvate. Positions 105 and 133 each coordinate phosphoenolpyruvate. Ser178, Gln180, Asp331, and Lys358 together coordinate 3-phosphoshikimate. Gln180 lines the phosphoenolpyruvate pocket. Asp331 serves as the catalytic Proton acceptor. Arg362 and Arg406 together coordinate phosphoenolpyruvate.

It belongs to the EPSP synthase family. As to quaternary structure, monomer.

It localises to the cytoplasm. It carries out the reaction 3-phosphoshikimate + phosphoenolpyruvate = 5-O-(1-carboxyvinyl)-3-phosphoshikimate + phosphate. It functions in the pathway metabolic intermediate biosynthesis; chorismate biosynthesis; chorismate from D-erythrose 4-phosphate and phosphoenolpyruvate: step 6/7. Catalyzes the transfer of the enolpyruvyl moiety of phosphoenolpyruvate (PEP) to the 5-hydroxyl of shikimate-3-phosphate (S3P) to produce enolpyruvyl shikimate-3-phosphate and inorganic phosphate. In Rhodospirillum rubrum (strain ATCC 11170 / ATH 1.1.1 / DSM 467 / LMG 4362 / NCIMB 8255 / S1), this protein is 3-phosphoshikimate 1-carboxyvinyltransferase.